A 508-amino-acid polypeptide reads, in one-letter code: Endoglucanase 6 (508 aa).

The first 33 residues, 1–33 (MLAASLRVEAVAVVAAAVLVLLLSPAAVVVVAG), serve as a signal peptide directing secretion. The active-site Nucleophile is the aspartate 89. Residues histidine 419, aspartate 471, and glutamate 480 contribute to the active site.

This sequence belongs to the glycosyl hydrolase 9 (cellulase E) family.

The protein resides in the secreted. The catalysed reaction is Endohydrolysis of (1-&gt;4)-beta-D-glucosidic linkages in cellulose, lichenin and cereal beta-D-glucans.. In Oryza sativa subsp. japonica (Rice), this protein is Endoglucanase 6.